Reading from the N-terminus, the 296-residue chain is Polyamine aminopropyltransferase (296 aa).

Positions 5-238 constitute a PABS domain; sequence ELWYETLHAN…GIMTFAWATQ (234 aa). Residue Gln-33 coordinates S-methyl-5'-thioadenosine. Residues His-64 and Asp-88 each contribute to the spermidine site. S-methyl-5'-thioadenosine-binding positions include Glu-108 and 140–141; that span reads DG. The active-site Proton acceptor is the Asp-158. 158–161 provides a ligand contact to spermidine; that stretch reads DCTD. Pro-165 provides a ligand contact to S-methyl-5'-thioadenosine.

It belongs to the spermidine/spermine synthase family. As to quaternary structure, homodimer or homotetramer.

It is found in the cytoplasm. It carries out the reaction S-adenosyl 3-(methylsulfanyl)propylamine + putrescine = S-methyl-5'-thioadenosine + spermidine + H(+). It participates in amine and polyamine biosynthesis; spermidine biosynthesis; spermidine from putrescine: step 1/1. Functionally, catalyzes the irreversible transfer of a propylamine group from the amino donor S-adenosylmethioninamine (decarboxy-AdoMet) to putrescine (1,4-diaminobutane) to yield spermidine. This chain is Polyamine aminopropyltransferase, found in Yersinia pseudotuberculosis serotype O:1b (strain IP 31758).